A 253-amino-acid polypeptide reads, in one-letter code: Cell division protein ZapD (253 aa).

The protein belongs to the ZapD family. In terms of assembly, interacts with FtsZ.

Its subcellular location is the cytoplasm. In terms of biological role, cell division factor that enhances FtsZ-ring assembly. Directly interacts with FtsZ and promotes bundling of FtsZ protofilaments, with a reduction in FtsZ GTPase activity. The polypeptide is Cell division protein ZapD (Bordetella bronchiseptica (strain ATCC BAA-588 / NCTC 13252 / RB50) (Alcaligenes bronchisepticus)).